Here is a 234-residue protein sequence, read N- to C-terminus: Sugar fermentation stimulation protein homolog (234 aa).

This sequence belongs to the SfsA family.

The chain is Sugar fermentation stimulation protein homolog from Pectobacterium carotovorum subsp. carotovorum (strain PC1).